A 216-amino-acid chain; its full sequence is LexA repressor (216 aa).

The H-T-H motif DNA-binding region spans 28–48 (RAEIAAEFGFSSPNAAEEHLR). Catalysis depends on for autocatalytic cleavage activity residues Ser134 and Lys171.

This sequence belongs to the peptidase S24 family. In terms of assembly, homodimer.

It carries out the reaction Hydrolysis of Ala-|-Gly bond in repressor LexA.. Represses a number of genes involved in the response to DNA damage (SOS response), including recA and lexA. In the presence of single-stranded DNA, RecA interacts with LexA causing an autocatalytic cleavage which disrupts the DNA-binding part of LexA, leading to derepression of the SOS regulon and eventually DNA repair. The protein is LexA repressor of Ralstonia pickettii (strain 12J).